Here is a 387-residue protein sequence, read N- to C-terminus: Eukaryotic translation initiation factor 3 subunit M (387 aa).

Residues 181–340 form the PCI domain; sequence LSSKVMIELL…RKVHISSTMH (160 aa).

The protein belongs to the eIF-3 subunit M family. Component of the eukaryotic translation initiation factor 3 (eIF-3) complex. The eIF-3 complex interacts with pix.

The protein localises to the cytoplasm. The protein resides in the golgi apparatus. Its function is as follows. Component of the eukaryotic translation initiation factor 3 (eIF-3) complex, which is involved in protein synthesis of a specialized repertoire of mRNAs and, together with other initiation factors, stimulates binding of mRNA and methionyl-tRNAi to the 40S ribosome. The eIF-3 complex specifically targets and initiates translation of a subset of mRNAs involved in cell proliferation. This Drosophila grimshawi (Hawaiian fruit fly) protein is Eukaryotic translation initiation factor 3 subunit M.